We begin with the raw amino-acid sequence, 332 residues long: Tryptophan--tRNA ligase (332 aa).

ATP is bound by residues 13–15 and 21–22; these read KPS and GN. The 'HIGH' region motif lies at 14–22; that stretch reads PSGDLTLGN. An L-tryptophan-binding site is contributed by aspartate 137. ATP contacts are provided by residues 149–151, isoleucine 188, and 197–201; these read GKD and KMSKS. The 'KMSKS' region signature appears at 197–201; that stretch reads KMSKS.

The protein belongs to the class-I aminoacyl-tRNA synthetase family. In terms of assembly, homodimer.

The protein localises to the cytoplasm. The enzyme catalyses tRNA(Trp) + L-tryptophan + ATP = L-tryptophyl-tRNA(Trp) + AMP + diphosphate + H(+). Functionally, catalyzes the attachment of tryptophan to tRNA(Trp). The sequence is that of Tryptophan--tRNA ligase from Clostridium perfringens (strain 13 / Type A).